Consider the following 261-residue polypeptide: Thiazole synthase (261 aa).

Lysine 98 functions as the Schiff-base intermediate with DXP in the catalytic mechanism. Residues glycine 159, 185–186 (AG), and 207–208 (AS) contribute to the 1-deoxy-D-xylulose 5-phosphate site.

It belongs to the ThiG family. Homotetramer. Forms heterodimers with either ThiH or ThiS.

Its subcellular location is the cytoplasm. It carries out the reaction [ThiS sulfur-carrier protein]-C-terminal-Gly-aminoethanethioate + 2-iminoacetate + 1-deoxy-D-xylulose 5-phosphate = [ThiS sulfur-carrier protein]-C-terminal Gly-Gly + 2-[(2R,5Z)-2-carboxy-4-methylthiazol-5(2H)-ylidene]ethyl phosphate + 2 H2O + H(+). It functions in the pathway cofactor biosynthesis; thiamine diphosphate biosynthesis. Catalyzes the rearrangement of 1-deoxy-D-xylulose 5-phosphate (DXP) to produce the thiazole phosphate moiety of thiamine. Sulfur is provided by the thiocarboxylate moiety of the carrier protein ThiS. In vitro, sulfur can be provided by H(2)S. The protein is Thiazole synthase of Mycobacterium leprae (strain Br4923).